The sequence spans 478 residues: Islet cell autoantigen 1 (478 aa).

The AH domain occupies 50–253 (ASDADLDAKL…TSHTMAAIHE (204 aa)). Positions 306–317 (EHKDSSAYKTEE) are enriched in basic and acidic residues. Disordered stretches follow at residues 306-365 (EHKD…SGDK) and 398-422 (LKEP…GFLP).

As to expression, predominantly expressed in brain, pancreas and stomach mucosa. High expression also found in stomach muscle and testis.

It is found in the cytoplasm. Its subcellular location is the cytosol. The protein resides in the golgi apparatus membrane. It localises to the cytoplasmic vesicle. The protein localises to the secretory vesicle membrane. It is found in the secretory vesicle. Its subcellular location is the synaptic vesicle membrane. Functionally, may play a role in neurotransmitter secretion. This chain is Islet cell autoantigen 1, found in Mus musculus (Mouse).